The following is a 249-amino-acid chain: Syntaxin-10 (249 aa).

An N-acetylserine modification is found at serine 2. Residues 2–228 (SLEDPFFVVR…VSHMTSDRRQ (227 aa)) lie on the Cytoplasmic side of the membrane. The stretch at 41-69 (EELDWTTNELRNGLRSIEWDLEDLEETIG) forms a coiled coil. Serine 108 is subject to Phosphoserine. Threonine 110 bears the Phosphothreonine mark. Residues serine 134, serine 140, and serine 143 each carry the phosphoserine modification. The 63-residue stretch at 157–219 (QLIMDEQDQQ…DGVLRKLAKV (63 aa)) folds into the t-SNARE coiled-coil homology domain. A helical; Anchor for type IV membrane protein membrane pass occupies residues 229-249 (WCAIAVLVGVLLLVLILLFSL).

Belongs to the syntaxin family. Interacts with VPS52. As to expression, expressed at high levels in heart, skeletal muscle and pancreas.

It is found in the golgi apparatus membrane. Functionally, SNARE involved in vesicular transport from the late endosomes to the trans-Golgi network. This is Syntaxin-10 (STX10) from Homo sapiens (Human).